A 500-amino-acid polypeptide reads, in one-letter code: Probable malate:quinone oxidoreductase (500 aa).

The protein belongs to the MQO family. The cofactor is FAD.

It carries out the reaction (S)-malate + a quinone = a quinol + oxaloacetate. The protein operates within carbohydrate metabolism; tricarboxylic acid cycle; oxaloacetate from (S)-malate (quinone route): step 1/1. The sequence is that of Probable malate:quinone oxidoreductase from Bacillus cereus (strain AH187).